The following is a 651-amino-acid chain: Probable potassium transport system protein Kup (651 aa).

12 consecutive transmembrane segments (helical) span residues 41-61, 82-102, 130-150, 163-183, 194-214, 235-255, 276-296, 309-329, 366-386, 395-415, 426-446, and 450-470; these read LVLG…IYAF, VVSF…VLFV, LILG…VITP, IVAP…LVTL, VAIV…ASGL, FLTV…LAMT, WLWI…AFIL, MIPS…TVIA, IYIP…VLGF, AYGI…YIVM, ALPI…ANII, and EGGW…WTWV.

It belongs to the HAK/KUP transporter (TC 2.A.72) family.

It localises to the cell inner membrane. It carries out the reaction K(+)(in) + H(+)(in) = K(+)(out) + H(+)(out). In terms of biological role, transport of potassium into the cell. Likely operates as a K(+):H(+) symporter. This chain is Probable potassium transport system protein Kup, found in Brucella ovis (strain ATCC 25840 / 63/290 / NCTC 10512).